The chain runs to 146 residues: Large ribosomal subunit protein bL9 (146 aa).

This sequence belongs to the bacterial ribosomal protein bL9 family.

Functionally, binds to the 23S rRNA. The sequence is that of Large ribosomal subunit protein bL9 from Nautilia profundicola (strain ATCC BAA-1463 / DSM 18972 / AmH).